The chain runs to 296 residues: DNA primase small subunit PriS (296 aa).

Catalysis depends on residues Asp-82, Asp-84, and Asp-191.

This sequence belongs to the eukaryotic-type primase small subunit family. As to quaternary structure, heterodimer of a small subunit (PriS) and a large subunit (PriL). Requires Mg(2+) as cofactor. Mn(2+) serves as cofactor.

Functionally, catalytic subunit of DNA primase, an RNA polymerase that catalyzes the synthesis of short RNA molecules used as primers for DNA polymerase during DNA replication. The small subunit contains the primase catalytic core and has DNA synthesis activity on its own. Binding to the large subunit stabilizes and modulates the activity, increasing the rate of DNA synthesis while decreasing the length of the DNA fragments, and conferring RNA synthesis capability. The DNA polymerase activity may enable DNA primase to also catalyze primer extension after primer synthesis. May also play a role in DNA repair. In Methanopyrus kandleri (strain AV19 / DSM 6324 / JCM 9639 / NBRC 100938), this protein is DNA primase small subunit PriS.